The primary structure comprises 84 residues: Small ribosomal subunit protein bS16 (84 aa).

It belongs to the bacterial ribosomal protein bS16 family.

The protein is Small ribosomal subunit protein bS16 of Cupriavidus necator (strain ATCC 17699 / DSM 428 / KCTC 22496 / NCIMB 10442 / H16 / Stanier 337) (Ralstonia eutropha).